Consider the following 68-residue polypeptide: MAVPFRRTGKTAKRKRRTHYKLSNPALVLCKETNTFTLSHRVTKNSGYYKGKLILENKPSKAQKTTDN.

This sequence belongs to the bacterial ribosomal protein bL32 family.

In Onion yellows phytoplasma (strain OY-M), this protein is Large ribosomal subunit protein bL32.